The primary structure comprises 118 residues: Large ribosomal subunit protein bL19 (118 aa).

The protein belongs to the bacterial ribosomal protein bL19 family.

This protein is located at the 30S-50S ribosomal subunit interface and may play a role in the structure and function of the aminoacyl-tRNA binding site. This Frankia alni (strain DSM 45986 / CECT 9034 / ACN14a) protein is Large ribosomal subunit protein bL19.